We begin with the raw amino-acid sequence, 165 residues long: Lipoprotein signal peptidase (165 aa).

A run of 2 helical transmembrane segments spans residues 68–88 (PLLP…GLFG) and 100–120 (GFLL…GEVI). Active-site residues include Asp-121 and Asp-137. The chain crosses the membrane as a helical span at residues 130–150 (FPVFNIADISINVGLACLIFA).

The protein belongs to the peptidase A8 family.

It is found in the cell inner membrane. It catalyses the reaction Release of signal peptides from bacterial membrane prolipoproteins. Hydrolyzes -Xaa-Yaa-Zaa-|-(S,diacylglyceryl)Cys-, in which Xaa is hydrophobic (preferably Leu), and Yaa (Ala or Ser) and Zaa (Gly or Ala) have small, neutral side chains.. The protein operates within protein modification; lipoprotein biosynthesis (signal peptide cleavage). Its function is as follows. This protein specifically catalyzes the removal of signal peptides from prolipoproteins. This Acaryochloris marina (strain MBIC 11017) protein is Lipoprotein signal peptidase.